We begin with the raw amino-acid sequence, 164 residues long: CDP-archaeol synthase (164 aa).

Helical transmembrane passes span 3–23 (LTVF…AVFA), 55–75 (AIGI…YHVI), 77–97 (VFDA…GAFI), and 122–142 (FLVY…AVVI).

It belongs to the CDP-archaeol synthase family. Mg(2+) serves as cofactor.

The protein localises to the cell membrane. The catalysed reaction is 2,3-bis-O-(geranylgeranyl)-sn-glycerol 1-phosphate + CTP + H(+) = CDP-2,3-bis-O-(geranylgeranyl)-sn-glycerol + diphosphate. It functions in the pathway membrane lipid metabolism; glycerophospholipid metabolism. In terms of biological role, catalyzes the formation of CDP-2,3-bis-(O-geranylgeranyl)-sn-glycerol (CDP-archaeol) from 2,3-bis-(O-geranylgeranyl)-sn-glycerol 1-phosphate (DGGGP) and CTP. This reaction is the third ether-bond-formation step in the biosynthesis of archaeal membrane lipids. The sequence is that of CDP-archaeol synthase from Pyrobaculum aerophilum (strain ATCC 51768 / DSM 7523 / JCM 9630 / CIP 104966 / NBRC 100827 / IM2).